The following is a 334-amino-acid chain: S-adenosylmethionine decarboxylase proenzyme 2 (334 aa).

Position 7 (Phe7) interacts with substrate. Residues Glu8 and Glu11 contribute to the active site. Position 67 (Glu67) interacts with substrate. The active-site Schiff-base intermediate with substrate; via pyruvic acid is the Ser68. Ser68 is modified (pyruvic acid (Ser); by autocatalysis). Cys82 acts as the Proton donor; for catalytic activity in catalysis. A substrate-binding site is contributed by Phe223. Residues Ser229 and His243 each act as proton acceptor; for processing activity in the active site. Glu247 provides a ligand contact to substrate. The residue at position 298 (Ser298) is a Phosphoserine.

This sequence belongs to the eukaryotic AdoMetDC family. As to quaternary structure, heterotetramer of two alpha and two beta chains. The cofactor is pyruvate. In terms of processing, is synthesized initially as an inactive proenzyme. Formation of the active enzyme involves a self-maturation process in which the active site pyruvoyl group is generated from an internal serine residue via an autocatalytic post-translational modification. Two non-identical subunits are generated from the proenzyme in this reaction, and the pyruvate is formed at the N-terminus of the alpha chain, which is derived from the carboxyl end of the proenzyme. The post-translation cleavage follows an unusual pathway, termed non-hydrolytic serinolysis, in which the side chain hydroxyl group of the serine supplies its oxygen atom to form the C-terminus of the beta chain, while the remainder of the serine residue undergoes an oxidative deamination to produce ammonia and the pyruvoyl group blocking the N-terminus of the alpha chain.

It catalyses the reaction S-adenosyl-L-methionine + H(+) = S-adenosyl 3-(methylsulfanyl)propylamine + CO2. It participates in amine and polyamine biosynthesis; S-adenosylmethioninamine biosynthesis; S-adenosylmethioninamine from S-adenosyl-L-methionine: step 1/1. Its function is as follows. Essential for biosynthesis of the polyamines spermidine and spermine. Promotes maintenance and self-renewal of embryonic stem cells, by maintaining spermine levels. This Mus spretus (Western Mediterranean mouse) protein is S-adenosylmethionine decarboxylase proenzyme 2 (Amd2).